Reading from the N-terminus, the 663-residue chain is Shugoshin 1 (663 aa).

Coiled coils occupy residues lysine 8 to lysine 29 and aspartate 110 to glutamate 132. Disordered stretches follow at residues arginine 207–asparagine 250, glutamate 278–glycine 401, and phenylalanine 417–asparagine 478. Composition is skewed to basic and acidic residues over residues arginine 231–glutamate 242, threonine 280–aspartate 304, lysine 339–arginine 358, and lysine 366–methionine 394. Residues asparagine 427–glutamate 437 are compositionally biased toward low complexity. The span at serine 443–lysine 453 shows a compositional bias: basic and acidic residues.

Belongs to the shugoshin family. Binds microtubules. In terms of processing, ubiquitinated by the anaphase promoting complex (APC) at the onset of anaphase, conducting to its degradation.

It localises to the nucleus. The protein localises to the chromosome. The protein resides in the centromere. Its subcellular location is the kinetochore. It is found in the nucleus speckle. Its function is as follows. Plays a central role in chromosome cohesion during mitosis by preventing premature dissociation of cohesin complex from centromeres after prophase, when most of cohesin complex dissociates from chromosomes arms. May act by preventing phosphorylation of the stag2 subunit of cohesin complex at the centromere, ensuring cohesin persistence at centromere until cohesin cleavage by espl1/separase at anaphase. May regulate kinetochore microtubule stability in mitosis, possibly to sense tension on mitotic chromosomes. This chain is Shugoshin 1, found in Xenopus laevis (African clawed frog).